Reading from the N-terminus, the 220-residue chain is Adenylate kinase (220 aa).

Residue Gly-10–Thr-15 coordinates ATP. Residues Ser-30–Ile-59 are NMP. AMP is bound by residues Ser-31, Arg-36, Asp-57–Ile-59, Gly-83–Arg-86, and Gln-90. Residues Gly-124–Asp-161 are LID. Arg-125 lines the ATP pocket. Zn(2+) contacts are provided by Cys-128 and Cys-131. Position 134–135 (Val-134–Tyr-135) interacts with ATP. Cys-148 and Cys-151 together coordinate Zn(2+). AMP-binding residues include Arg-158 and Arg-169. Gly-197 serves as a coordination point for ATP.

This sequence belongs to the adenylate kinase family. In terms of assembly, monomer.

It localises to the cytoplasm. The enzyme catalyses AMP + ATP = 2 ADP. It participates in purine metabolism; AMP biosynthesis via salvage pathway; AMP from ADP: step 1/1. Functionally, catalyzes the reversible transfer of the terminal phosphate group between ATP and AMP. Plays an important role in cellular energy homeostasis and in adenine nucleotide metabolism. This is Adenylate kinase from Pyrococcus furiosus (strain ATCC 43587 / DSM 3638 / JCM 8422 / Vc1).